A 455-amino-acid polypeptide reads, in one-letter code: Dihydrolipoyllysine-residue succinyltransferase component of 2-oxoglutarate dehydrogenase complex, mitochondrial (455 aa).

The N-terminal 68 residues, 1–68 (MLSRSRCASR…RFFRTTAVCK (68 aa)), are a transit peptide targeting the mitochondrion. The Lipoyl-binding domain occupies 71-145 (VITVKTPAFA…EGGTPLFTLR (75 aa)). Residue S82 is modified to Phosphoserine. An N6-lipoyllysine modification is found at K111. The residue at position 155 (K155) is an N6-acetyllysine. Residues 155–173 (KPAAAPAAAAPKAEPTVSA) are compositionally biased toward low complexity. The segment at 155–220 (KPAAAPAAAA…PRAEAGAGVG (66 aa)) is disordered. A compositionally biased stretch (pro residues) spans 174 to 193 (VPPPPAAPIPTQMPPVPSPS). 5 positions are modified to N6-acetyllysine: K269, K274, K275, K279, and K309. Active-site residues include H426 and D430.

It belongs to the 2-oxoacid dehydrogenase family. In terms of assembly, the 2-oxoglutarate dehydrogenase complex is composed of OGDH (2-oxoglutarate dehydrogenase; E1), DLST (dihydrolipoamide succinyltransferase; E2), DLD (dihydrolipoamide dehydrogenase; E3) and the assembly factor KGD4. It contains multiple copies of the three enzymatic components (E1, E2 and E3). In the nucleus, the 2-oxoglutarate dehydrogenase complex associates with KAT2A. Interacts with ABHD11; this interaction maintains the functional lipoylation of the 2-oxoglutarate dehydrogenase complex. The cofactor is (R)-lipoate.

It localises to the mitochondrion matrix. It is found in the nucleus. It carries out the reaction N(6)-[(R)-dihydrolipoyl]-L-lysyl-[protein] + succinyl-CoA = N(6)-[(R)-S(8)-succinyldihydrolipoyl]-L-lysyl-[protein] + CoA. Its pathway is amino-acid degradation; L-lysine degradation via saccharopine pathway; glutaryl-CoA from L-lysine: step 6/6. The protein operates within carbohydrate metabolism; tricarboxylic acid cycle. Dihydrolipoamide succinyltransferase (E2) component of the 2-oxoglutarate dehydrogenase complex. The 2-oxoglutarate dehydrogenase complex catalyzes the overall conversion of 2-oxoglutarate to succinyl-CoA and CO(2). The 2-oxoglutarate dehydrogenase complex is mainly active in the mitochondrion. A fraction of the 2-oxoglutarate dehydrogenase complex also localizes in the nucleus and is required for lysine succinylation of histones: associates with KAT2A on chromatin and provides succinyl-CoA to histone succinyltransferase KAT2A. The chain is Dihydrolipoyllysine-residue succinyltransferase component of 2-oxoglutarate dehydrogenase complex, mitochondrial from Bos taurus (Bovine).